Consider the following 334-residue polypeptide: uncharacterized protein (334 aa).

Transmembrane regions (helical) follow at residues 1–21 and 46–66; these read MFRL…FTFI and ILGL…IIII.

It is found in the cell membrane. This is an uncharacterized protein from Rickettsia prowazekii (strain Madrid E).